Consider the following 338-residue polypeptide: MKNSADITVLGAGSYGTALAISLASNGHKTLLWGHDPVHMQTLAQDKCNQAFLPDIAFPDCLQIEADLAKALAASNNVLVVVPSHVFGTVLEQAKPLLRSDARIVWATKGLEPETGRLLQDVARDVLGEQYPLAVLSGPTFAKELAMGLPTAISVAGTCPQFTEDLVELLHSPKRLRVYANDDFTGLQLGGAVKNVIAIGAGMSDGIGFGANARTALITRGLVELTRLGEALGASTATFMGMAGLGDLVLTCTDNQSRNRRFGLALGKGCDVMTAQAEIGQVVEGYRNTKEVFTLAKRLGVEMPITEQIYQVLYQGKSPVDAAKELLGREKKSETPTQ.

Residues Ser-14, Tyr-15, His-35, and Lys-109 each contribute to the NADPH site. Sn-glycerol 3-phosphate contacts are provided by Lys-109, Gly-138, and Thr-140. Residue Ala-142 participates in NADPH binding. Sn-glycerol 3-phosphate-binding residues include Lys-194, Asp-247, Ser-257, Arg-258, and Asn-259. The active-site Proton acceptor is Lys-194. Arg-258 lines the NADPH pocket. NADPH contacts are provided by Val-282 and Glu-284.

It belongs to the NAD-dependent glycerol-3-phosphate dehydrogenase family.

Its subcellular location is the cytoplasm. It catalyses the reaction sn-glycerol 3-phosphate + NAD(+) = dihydroxyacetone phosphate + NADH + H(+). It carries out the reaction sn-glycerol 3-phosphate + NADP(+) = dihydroxyacetone phosphate + NADPH + H(+). Its pathway is membrane lipid metabolism; glycerophospholipid metabolism. Functionally, catalyzes the reduction of the glycolytic intermediate dihydroxyacetone phosphate (DHAP) to sn-glycerol 3-phosphate (G3P), the key precursor for phospholipid synthesis. The chain is Glycerol-3-phosphate dehydrogenase [NAD(P)+] from Shewanella putrefaciens (strain CN-32 / ATCC BAA-453).